The following is a 459-amino-acid chain: Zinc finger protein ZPR1 (459 aa).

Low complexity predominate over residues 1 to 29 (MSAGGAVEPGLPAAAAAPSAAPARDPGPG). Residues 1–43 (MSAGGAVEPGLPAAAAAPSAAPARDPGPGHLFRPISAEDEEQQ) form a disordered region. C4-type zinc fingers lie at residues 51 to 83 (CMNC…CEHC) and 259 to 291 (CPEC…CENC). The disordered stretch occupies residues 438 to 459 (NEELGLNDMKTEGYETGLPAQR).

Belongs to the ZPR1 family. As to quaternary structure, component of an import snRNP complex composed of KPNB1, SNUPN, SMN1 and ZNF259. Interacts (via C-terminal region) with SMN1 (via C-terminal region); the interaction occurs after treatment with serum. Interacts with elongation factor 1-alpha EEF1A1; the interaction occurs in a epidermal growth factor (EGF)-dependent manner. Interacts (via zinc fingers) with EGFR (via C-terminal cytoplasmic kinase domain); the interaction is negatively regulated in response to epidermal growth factor (EGF) stimulation and EGFR kinase activity. May also bind to the PDGFR receptor.

It localises to the nucleus. The protein resides in the cytoplasm. It is found in the nucleolus. The protein localises to the perinuclear region. Its subcellular location is the gem. It localises to the cajal body. The protein resides in the cell projection. It is found in the axon. The protein localises to the growth cone. Its function is as follows. Acts as a signaling molecule that communicates proliferative growth signals from the cytoplasm to the nucleus. Plays a role for the localization and accumulation of the survival motor neuron protein SMN1 in sub-nuclear bodies, including gems and Cajal bodies. Induces neuron differentiation and stimulates axonal growth and formation of growth cone in spinal cord motor neurons. Plays a role in the splicing of cellular pre-mRNAs. May be involved in H(2)O(2)-induced neuronal cell death. The protein is Zinc finger protein ZPR1 (ZNF259) of Bos taurus (Bovine).